The following is a 1479-amino-acid chain: Peroxidasin homolog (1479 aa).

The N-terminal stretch at 1–26 (MAKRSRGPGRRCLLALVLFCAWGTLA) is a signal peptide. Residues 27–63 (VVAQKPGAGCPSRCLCFRTTVRCMHLLLEAVPAVAPQ) form the LRRNT domain. 2 cysteine pairs are disulfide-bonded: Cys36–Cys42 and Cys40–Cys49. LRR repeat units follow at residues 61–84 (APQTSILDLRFNRIREIQPGAFRR), 85–108 (LRNLNTLLLNNNQIKRIPSGAFED), 110–132 (ENLKYLYLYKNEIQSIDRQAFKG), 133–156 (LASLEQLYLHFNQIETLDPDSFQH), 157–180 (LPKLERLFLHNNRITHLVPGTFNH), and 182–204 (ESMKRLRLDSNTLHCDCEILWLA). An LRRCT domain is found at 192–244 (NTLHCDCEILWLADLLKTYAESGNAQAAAICEYPRRIQGRSVATITPEELNCE). 6 disulfide bridges follow: Cys196-Cys243, Cys198-Cys222, Cys267-Cys317, Cys363-Cys412, Cys454-Cys502, and Cys546-Cys594. Ig-like C2-type domains lie at 246–332 (PRIT…QEVT), 342–428 (PTFV…AFII), 433–520 (PQFT…LTVQ), and 521–610 (PRVT…MVLS). Asn640, Asn699, Asn719, and Asn731 each carry an N-linked (GlcNAc...) asparagine glycan. 4 cysteine pairs are disulfide-bonded: Cys723/Cys885, Cys732/Cys748, Cys847/Cys857, and Cys851/Cys875. Residue Asp826 coordinates heme b. The active-site Proton acceptor is His827. Asp828 contributes to the Ca(2+) binding site. Asn865 carries an N-linked (GlcNAc...) asparagine glycan. Thr907, Tyr909, Asp911, and Ser913 together coordinate Ca(2+). An intrachain disulfide couples Cys959 to Cys970. Asn964 carries an N-linked (GlcNAc...) asparagine glycan. Heme b is bound by residues Glu980 and His1074. Residues 1151 to 1175 (ALDLAAINIQRGRDHGIPPYHDYRV) form an LRR 7 repeat. Phosphotyrosine is present on Tyr1176. 2 disulfides stabilise this stretch: Cys1177/Cys1234 and Cys1275/Cys1301. Asn1178 is a glycosylation site (N-linked (GlcNAc...) asparagine). Ser1180 is subject to Phosphoserine. The LRR 8 repeat unit spans residues 1270–1291 (LARILCDNADNITRVQSDVFRV). N-linked (GlcNAc...) asparagine glycans are attached at residues Asn1280, Asn1368, and Asn1425. A required in homotrimerization region spans residues 1315–1411 (CCEDCRTRGQ…QIKKLESRLS (97 aa)). The segment at 1342-1380 (YQEDKPTKKTRPRKIPSVGRQGEHLSNSTSAFSTRSDAS) is disordered. Over residues 1365–1380 (HLSNSTSAFSTRSDAS) the composition is skewed to polar residues. Positions 1413–1471 (TECVDAGGESHANNTKWKKDACTICECKDGQVTCFVEACPPATCAVPVNIPGACCPVCL) constitute a VWFC domain.

This sequence belongs to the peroxidase family. XPO subfamily. As to quaternary structure, homotrimer; disulfide-linked. The homotrimer form is predominant. Homooligomer; disulfide-linked. Oligomerization occurs intracellularly before C-terminal proteolytic cleavage. Interacts with PXDNL; this interaction inhibits the peroxidase activity of PXDN. Ca(2+) serves as cofactor. Requires heme b as cofactor. In terms of processing, glycosylated. Four sites are completely N-glycosylated (Asn-640, Asn-731, Asn-865 and Asn-1425), whereas the others are found partially glycosylated. Processed by FURIN and the proteolytic processing largely depends on the peroxidase activity of PXDN. The proteolytic cleavage occurs after intracellular homotrimerization and releases into the extracellular matrix a large, catalytically active fragment and a smaller fragment consisting primarily of the C-terminal VWFC domain. The processing enhances both peroxidase activity and sulfilimine cross-links formation. As to expression, expressed at higher levels in heart, lung, ovary, spleen, intestine and placenta, and at lower levels in liver, colon, pancreas, kidney, thymus, skeletal muscle and prostate. Expressed in tumors such as melanoma, breast cancer, ovarian cancer and glioblastoma. A shorter form probably lacking the signal sequence is found in testis and in EB1 cells undergoing p53/TP53-dependent apoptosis.

It is found in the secreted. The protein localises to the extracellular space. The protein resides in the extracellular matrix. Its subcellular location is the endoplasmic reticulum. It localises to the cell surface. It is found in the basement membrane. The enzyme catalyses L-lysyl-[collagen] + L-methionyl-[collagen] + H2O2 = [collagen]-L-lysyl-N-S-L-methionyl-[collagen] + 2 H2O + H(+). It catalyses the reaction bromide + H2O2 = hypobromite + H2O. It carries out the reaction L-lysyl-[collagen] + L-methionyl-[collagen] + hypobromite = [collagen]-L-lysyl-N-S-L-methionyl-[collagen] + bromide + H2O + H(+). The catalysed reaction is L-tyrosyl-[protein] + bromide + H2O2 + H(+) = 3-bromo-L-tyrosyl-[protein] + 2 H2O. The enzyme catalyses hypobromite + L-tyrosyl-[protein] + H(+) = 3-bromo-L-tyrosyl-[protein] + H2O. Its activity is regulated as follows. The hypobromous acid formation is activated by increasing nitrite concentrations and inhibited by increasing urate concentrations. Catalyzes the two-electron oxidation of bromide by hydrogen peroxide and generates hypobromite as a reactive intermediate which mediates the formation of sulfilimine cross-links between methionine and hydroxylysine residues within an uncross-linked collagen IV/COL4A1 NC1 hexamer. In turns, directly contributes to the collagen IV network-dependent fibronectin/FN and laminin assembly, which is required for full extracellular matrix (ECM)-mediated signaling. Thus, sulfilimine cross-links are essential for growth factor-induced cell proliferation and survival in endothelial cells, an event essential to basement membrane integrity. In addition, through the bromide oxidation, may promote tubulogenesis and induce angiogenesis through ERK1/2, Akt, and FAK pathways. Moreover brominates alpha2 collagen IV chain/COL4A2 at 'Tyr-1485' and leads to bromine enrichment of the basement membranes. In vitro, can also catalyze the two-electron oxidation of thiocyanate and iodide and these two substrates could effectively compete with bromide and thus inhibit the formation of sulfilimine bonds. Binds laminins. May play a role in the organization of eyeball structure and lens development during eye development. The polypeptide is Peroxidasin homolog (Homo sapiens (Human)).